We begin with the raw amino-acid sequence, 161 residues long: ATP synthase subunit b 1 (161 aa).

A helical transmembrane segment spans residues 3–23; sequence LDATFYALVGLILFFVLIAYL.

Belongs to the ATPase B chain family. As to quaternary structure, F-type ATPases have 2 components, F(1) - the catalytic core - and F(0) - the membrane proton channel. F(1) has five subunits: alpha(3), beta(3), gamma(1), delta(1), epsilon(1). F(0) has three main subunits: a(1), b(2) and c(10-14). The alpha and beta chains form an alternating ring which encloses part of the gamma chain. F(1) is attached to F(0) by a central stalk formed by the gamma and epsilon chains, while a peripheral stalk is formed by the delta and b chains.

It localises to the cell inner membrane. Its function is as follows. F(1)F(0) ATP synthase produces ATP from ADP in the presence of a proton or sodium gradient. F-type ATPases consist of two structural domains, F(1) containing the extramembraneous catalytic core and F(0) containing the membrane proton channel, linked together by a central stalk and a peripheral stalk. During catalysis, ATP synthesis in the catalytic domain of F(1) is coupled via a rotary mechanism of the central stalk subunits to proton translocation. Functionally, component of the F(0) channel, it forms part of the peripheral stalk, linking F(1) to F(0). This chain is ATP synthase subunit b 1, found in Rhizobium meliloti (strain 1021) (Ensifer meliloti).